A 204-amino-acid chain; its full sequence is Urease accessory protein UreG (204 aa).

Residue 12 to 19 (GPVGSGKT) participates in GTP binding.

This sequence belongs to the SIMIBI class G3E GTPase family. UreG subfamily. In terms of assembly, homodimer. UreD, UreF and UreG form a complex that acts as a GTP-hydrolysis-dependent molecular chaperone, activating the urease apoprotein by helping to assemble the nickel containing metallocenter of UreC. The UreE protein probably delivers the nickel.

The protein resides in the cytoplasm. Functionally, facilitates the functional incorporation of the urease nickel metallocenter. This process requires GTP hydrolysis, probably effectuated by UreG. This Pseudomonas fluorescens (strain SBW25) protein is Urease accessory protein UreG.